The following is a 187-amino-acid chain: UPF0301 protein YqgE (187 aa).

This sequence belongs to the UPF0301 (AlgH) family.

The sequence is that of UPF0301 protein YqgE from Escherichia coli O7:K1 (strain IAI39 / ExPEC).